A 150-amino-acid polypeptide reads, in one-letter code: Transcriptional repressor NrdR (150 aa).

A zinc finger lies at 3–34 (CPFCGYEDTFVIDTREIEDQKVIRRRRECPNC). The ATP-cone domain occupies 49–139 (IMVIKKDGRR…VYQEFSSLEE (91 aa)).

The protein belongs to the NrdR family. Requires Zn(2+) as cofactor.

Functionally, negatively regulates transcription of bacterial ribonucleotide reductase nrd genes and operons by binding to NrdR-boxes. The sequence is that of Transcriptional repressor NrdR from Dictyoglomus turgidum (strain DSM 6724 / Z-1310).